The chain runs to 367 residues: Glutamate 5-kinase (367 aa).

An ATP-binding site is contributed by lysine 8. Substrate contacts are provided by serine 49, aspartate 136, and asparagine 148. Residues 168–169 (TD) and 210–216 (TGGMVTK) contribute to the ATP site. The PUA domain maps to 275 to 353 (AGKLYLDEGA…REISTILGYA (79 aa)).

The protein belongs to the glutamate 5-kinase family.

The protein resides in the cytoplasm. It carries out the reaction L-glutamate + ATP = L-glutamyl 5-phosphate + ADP. It functions in the pathway amino-acid biosynthesis; L-proline biosynthesis; L-glutamate 5-semialdehyde from L-glutamate: step 1/2. Catalyzes the transfer of a phosphate group to glutamate to form L-glutamate 5-phosphate. The chain is Glutamate 5-kinase from Nostoc punctiforme (strain ATCC 29133 / PCC 73102).